A 319-amino-acid chain; its full sequence is Methyltransferase tpcM (319 aa).

A methyltransferase domain region spans residues 63-155 (DVGAGIGPYA…QLRPGGTFAC (93 aa)).

It belongs to the methyltransferase superfamily. Specifically expressed in conidia.

It participates in secondary metabolite biosynthesis. Functionally, methyltransferase; part of the gene cluster that mediates the biosynthesis of trypacidin, a mycotoxin with antiprotozoal activity and that plays a role in the infection process. The pathway begins with the synthesis of atrochrysone thioester by the polyketide synthase (PKS) tpcC. The atrochrysone carboxyl ACP thioesterase tpcB then breaks the thioester bond and releases the atrochrysone carboxylic acid from tpcC. The decarboxylase tpcK converts atrochrysone carboxylic acid to atrochrysone which is further reduced into emodin anthrone. The next step is performed by the emodin anthrone oxygenase tpcL that catalyzes the oxidation of emodinanthrone to emodin. Emodin O-methyltransferase encoded by tpcA catalyzes methylation of the 8-hydroxy group of emodin to form questin. Ring cleavage of questin by questin oxidase tpcI leads to desmethylsulochrin via several intermediates including questin epoxide. Another methylation step catalyzed by tpcM leads to the formation of sulochrin which is further converted to monomethylsulfochrin by tpcH. Finally, the tpcJ catalyzes the conversion of monomethylsulfochrin to trypacidin. Trypacidin is toxic for human pulmonary and bronchial epithelial cells by initiating the intracellular formation of nitric oxide (NO) and hydrogen peroxide (H(2)O(2)), thus triggering host necrotic cell death. The trypacidin pathway is also able to produce endocrocin via a distinct route from the endocrocin Enc pathway. The polypeptide is Methyltransferase tpcM (Aspergillus fumigatus (strain ATCC MYA-4609 / CBS 101355 / FGSC A1100 / Af293) (Neosartorya fumigata)).